A 452-amino-acid chain; its full sequence is tRNA modification GTPase MnmE (452 aa).

(6S)-5-formyl-5,6,7,8-tetrahydrofolate contacts are provided by Arg-21, Glu-78, and Lys-118. A TrmE-type G domain is found at 214-375; it reads GMKAVIAGRP…LREHLKTSMG (162 aa). Asn-224 serves as a coordination point for K(+). Residues 224-229, 243-249, and 268-271 each bind GTP; these read NAGKSS, TNIAGTT, and DTAG. A Mg(2+)-binding site is contributed by Ser-228. Residues Thr-243, Ile-245, and Thr-248 each coordinate K(+). Thr-249 is a binding site for Mg(2+). Lys-452 provides a ligand contact to (6S)-5-formyl-5,6,7,8-tetrahydrofolate.

Belongs to the TRAFAC class TrmE-Era-EngA-EngB-Septin-like GTPase superfamily. TrmE GTPase family. In terms of assembly, homodimer. Heterotetramer of two MnmE and two MnmG subunits. The cofactor is K(+).

The protein resides in the cytoplasm. Its function is as follows. Exhibits a very high intrinsic GTPase hydrolysis rate. Involved in the addition of a carboxymethylaminomethyl (cmnm) group at the wobble position (U34) of certain tRNAs, forming tRNA-cmnm(5)s(2)U34. This is tRNA modification GTPase MnmE from Haemophilus ducreyi (strain 35000HP / ATCC 700724).